A 289-amino-acid chain; its full sequence is Beta-lactamase Toho-2 (289 aa).

The signal sequence occupies residues 1–28 (MVTKRVQRMMSAAAACIPLLLGSPTLYA). The active-site Acyl-ester intermediate is S73. 235 to 237 (KTG) provides a ligand contact to substrate.

This sequence belongs to the class-A beta-lactamase family.

It catalyses the reaction a beta-lactam + H2O = a substituted beta-amino acid. Its activity is regulated as follows. Inhibited 16-fold better by the beta-lactamase inhibitor tazobactam than by clavulanic acid. Its function is as follows. Hydrolyzes beta-lactam antibiotics such as penicillin G, carbenicillin, cephaloridine, cefoxitin, cefotaxime, ceftazidime, and aztreonam. Has especially increased relative hydrolysis rates for cephalothin, cephaloridine, cefotaxime and ceftizoxime. This is Beta-lactamase Toho-2 (bla) from Escherichia coli.